Reading from the N-terminus, the 205-residue chain is Outer-membrane lipoprotein LolB (205 aa).

The signal sequence occupies residues 1 to 17 (MRLRLFLAASALALLSG). Cysteine 18 carries the N-palmitoyl cysteine lipid modification. Residue cysteine 18 is the site of S-diacylglycerol cysteine attachment.

Belongs to the LolB family. Monomer.

The protein localises to the cell outer membrane. Its function is as follows. Plays a critical role in the incorporation of lipoproteins in the outer membrane after they are released by the LolA protein. The protein is Outer-membrane lipoprotein LolB of Pseudomonas aeruginosa (strain LESB58).